Consider the following 882-residue polypeptide: DNA mismatch repair protein MutS (882 aa).

627-634 (GPNMAGKS) contributes to the ATP binding site.

The protein belongs to the DNA mismatch repair MutS family.

Functionally, this protein is involved in the repair of mismatches in DNA. It is possible that it carries out the mismatch recognition step. This protein has a weak ATPase activity. This Anaeromyxobacter dehalogenans (strain 2CP-1 / ATCC BAA-258) protein is DNA mismatch repair protein MutS.